Reading from the N-terminus, the 719-residue chain is 1,4-alpha-glucan branching enzyme GlgB (719 aa).

The Nucleophile role is filled by Asp-400. The active-site Proton donor is the Glu-453.

Belongs to the glycosyl hydrolase 13 family. GlgB subfamily. In terms of assembly, monomer.

It carries out the reaction Transfers a segment of a (1-&gt;4)-alpha-D-glucan chain to a primary hydroxy group in a similar glucan chain.. It functions in the pathway glycan biosynthesis; glycogen biosynthesis. Functionally, catalyzes the formation of the alpha-1,6-glucosidic linkages in glycogen by scission of a 1,4-alpha-linked oligosaccharide from growing alpha-1,4-glucan chains and the subsequent attachment of the oligosaccharide to the alpha-1,6 position. In Chlamydia caviae (strain ATCC VR-813 / DSM 19441 / 03DC25 / GPIC) (Chlamydophila caviae), this protein is 1,4-alpha-glucan branching enzyme GlgB.